Reading from the N-terminus, the 353-residue chain is Farnesyl pyrophosphate synthase (353 aa).

Residues K57, R60, and Q96 each coordinate isopentenyl diphosphate. K57 is modified (N6-(2-hydroxyisobutyryl)lysine; alternate). K57 carries the post-translational modification N6-acetyllysine; alternate. The Mg(2+) site is built by D103 and D107. R112 lines the dimethylallyl diphosphate pocket. Residue R113 coordinates isopentenyl diphosphate. The dimethylallyl diphosphate site is built by K200, T201, Q240, K257, and K266.

It belongs to the FPP/GGPP synthase family. In terms of assembly, homodimer. Interacts with RSAD2. Requires Mg(2+) as cofactor.

Its subcellular location is the cytoplasm. It catalyses the reaction isopentenyl diphosphate + dimethylallyl diphosphate = (2E)-geranyl diphosphate + diphosphate. The enzyme catalyses isopentenyl diphosphate + (2E)-geranyl diphosphate = (2E,6E)-farnesyl diphosphate + diphosphate. It functions in the pathway isoprenoid biosynthesis; farnesyl diphosphate biosynthesis; farnesyl diphosphate from geranyl diphosphate and isopentenyl diphosphate: step 1/1. Its pathway is isoprenoid biosynthesis; geranyl diphosphate biosynthesis; geranyl diphosphate from dimethylallyl diphosphate and isopentenyl diphosphate: step 1/1. Its activity is regulated as follows. Inactivated by interferon-induced RSAD2. This inactivation may result of disruption of lipid rafts at the plasma membrane, and thus have an antiviral effect since many enveloped viruses need lipid rafts to bud efficiently out of the cell. Functionally, key enzyme in isoprenoid biosynthesis which catalyzes the formation of farnesyl diphosphate (FPP), a precursor for several classes of essential metabolites including sterols, dolichols, carotenoids, and ubiquinones. FPP also serves as substrate for protein farnesylation and geranylgeranylation. Catalyzes the sequential condensation of isopentenyl pyrophosphate with the allylic pyrophosphates, dimethylallyl pyrophosphate, and then with the resultant geranylpyrophosphate to the ultimate product farnesyl pyrophosphate. The sequence is that of Farnesyl pyrophosphate synthase (Fdps) from Mus musculus (Mouse).